The primary structure comprises 574 residues: Frizzled and smoothened-like protein G (574 aa).

The first 19 residues, 1–19 (MKSIIFITFFIFFLKKLNG), serve as a signal peptide directing secretion. Residues 20–246 (LPNGYGVGLV…EKWNQIENLS (227 aa)) are Extracellular-facing. The region spanning 30-181 (DPNGQCMNYI…GLYEVPCFNP (152 aa)) is the FZ domain. 4 disulfides stabilise this stretch: Cys-35/Cys-109, Cys-48/Cys-102, Cys-91/Cys-138, and Cys-127/Cys-178. Asn-119, Asn-161, Asn-187, Asn-206, Asn-233, and Asn-244 each carry an N-linked (GlcNAc...) asparagine glycan. The helical transmembrane segment at 247-267 (KVLSTISFVCSIYNILSFGIL) threads the bilayer. At 268–273 (KKKKTK) the chain is on the cytoplasmic side. A helical transmembrane segment spans residues 274-294 (YTICISALSASVALINLGDII). Topologically, residues 295–324 (KIGVGYEKVLCPEPGRFATQVDDPLCGLTA) are extracellular. A helical transmembrane segment spans residues 325-345 (ALFHVGICSTVLWTTTMAIYL). The Cytoplasmic portion of the chain corresponds to 346–358 (YSAIKNIKLFKFR). The helical transmembrane segment at 359–379 (YFIIFNTGFSLTSLIIAASAS) threads the bilayer. Residues 380-401 (KFEAGTGSIECWIRDRWYSICL) lie on the Extracellular side of the membrane. A helical membrane pass occupies residues 402–422 (FWLPCGICLLIGTICIASVIV). At 423–445 (EIYKVSKNIKLSESETIMRQIKP) the chain is on the cytoplasmic side. A helical transmembrane segment spans residues 446–466 (IISVILVSGSFTYLFIIFFDI). At 467–502 (ERNFGGYRSAVTDYVLCLLNSTDNGIECHTSGPSYN) the chain is on the extracellular side. N-linked (GlcNAc...) asparagine glycosylation is present at Asn-486. A helical membrane pass occupies residues 503-523 (PYFMFYFFMRFFGILFFLIYG). At 524–574 (TSKNARDSWYELFIKIKVSLSETSSTISNNSGGGSSQQKQQQQNEIKLEKI) the chain is on the cytoplasmic side. The span at 550 to 568 (ISNNSGGGSSQQKQQQQNE) shows a compositional bias: low complexity. The disordered stretch occupies residues 550–574 (ISNNSGGGSSQQKQQQQNEIKLEKI).

Belongs to the G-protein coupled receptor Fz/Smo family.

The protein resides in the membrane. The sequence is that of Frizzled and smoothened-like protein G (fslG) from Dictyostelium discoideum (Social amoeba).